Reading from the N-terminus, the 91-residue chain is Small ribosomal subunit protein uS19 (91 aa).

The protein belongs to the universal ribosomal protein uS19 family.

Its function is as follows. Protein S19 forms a complex with S13 that binds strongly to the 16S ribosomal RNA. The sequence is that of Small ribosomal subunit protein uS19 from Saccharophagus degradans (strain 2-40 / ATCC 43961 / DSM 17024).